Consider the following 507-residue polypeptide: ATP synthase subunit alpha, chloroplastic (507 aa).

An ATP-binding site is contributed by 170–177 (GDRQTGKT).

It belongs to the ATPase alpha/beta chains family. F-type ATPases have 2 components, CF(1) - the catalytic core - and CF(0) - the membrane proton channel. CF(1) has five subunits: alpha(3), beta(3), gamma(1), delta(1), epsilon(1). CF(0) has four main subunits: a, b, b' and c.

The protein localises to the plastid. It localises to the chloroplast thylakoid membrane. The catalysed reaction is ATP + H2O + 4 H(+)(in) = ADP + phosphate + 5 H(+)(out). In terms of biological role, produces ATP from ADP in the presence of a proton gradient across the membrane. The alpha chain is a regulatory subunit. This Huperzia lucidula (Shining clubmoss) protein is ATP synthase subunit alpha, chloroplastic.